Consider the following 205-residue polypeptide: Large ribosomal subunit protein uL3 (205 aa).

Belongs to the universal ribosomal protein uL3 family. As to quaternary structure, part of the 50S ribosomal subunit. Forms a cluster with proteins L14 and L19.

Functionally, one of the primary rRNA binding proteins, it binds directly near the 3'-end of the 23S rRNA, where it nucleates assembly of the 50S subunit. This Thermosipho melanesiensis (strain DSM 12029 / CIP 104789 / BI429) protein is Large ribosomal subunit protein uL3.